Here is a 177-residue protein sequence, read N- to C-terminus: Adenine phosphoribosyltransferase (177 aa).

It belongs to the purine/pyrimidine phosphoribosyltransferase family. As to quaternary structure, homodimer.

It localises to the cytoplasm. It carries out the reaction AMP + diphosphate = 5-phospho-alpha-D-ribose 1-diphosphate + adenine. The protein operates within purine metabolism; AMP biosynthesis via salvage pathway; AMP from adenine: step 1/1. Its function is as follows. Catalyzes a salvage reaction resulting in the formation of AMP, that is energically less costly than de novo synthesis. The chain is Adenine phosphoribosyltransferase from Leptospira biflexa serovar Patoc (strain Patoc 1 / Ames).